We begin with the raw amino-acid sequence, 369 residues long: Dihydroorotate dehydrogenase (quinone) (369 aa).

Residues 76 to 80 (AGLDK) and Thr100 contribute to the FMN site. Lys80 serves as a coordination point for substrate. 125 to 129 (NRMGF) contacts substrate. Asn154 and Asn187 together coordinate FMN. Asn187 is a substrate binding site. The Nucleophile role is filled by Ser190. Asn192 contacts substrate. FMN-binding residues include Lys232 and Ser260. 261 to 262 (NT) lines the substrate pocket. FMN is bound by residues Gly282, Gly311, and 332 to 333 (YS).

This sequence belongs to the dihydroorotate dehydrogenase family. Type 2 subfamily. As to quaternary structure, monomer. FMN is required as a cofactor.

It is found in the cell membrane. The enzyme catalyses (S)-dihydroorotate + a quinone = orotate + a quinol. Its pathway is pyrimidine metabolism; UMP biosynthesis via de novo pathway; orotate from (S)-dihydroorotate (quinone route): step 1/1. In terms of biological role, catalyzes the conversion of dihydroorotate to orotate with quinone as electron acceptor. The chain is Dihydroorotate dehydrogenase (quinone) (pyrD) from Deinococcus radiodurans (strain ATCC 13939 / DSM 20539 / JCM 16871 / CCUG 27074 / LMG 4051 / NBRC 15346 / NCIMB 9279 / VKM B-1422 / R1).